We begin with the raw amino-acid sequence, 32 residues long: Delta-conotoxin-like CnVID (32 aa).

Cystine bridges form between Cys-3–Cys-18, Cys-10–Cys-22, and Cys-17–Cys-27. 4-hydroxyproline is present on residues Pro-6 and Pro-14.

This sequence belongs to the conotoxin O1 superfamily. In terms of tissue distribution, expressed by the venom duct.

Its subcellular location is the secreted. Functionally, delta-conotoxins bind to site 6 of voltage-gated sodium channels (Nav) and inhibit the inactivation process. This toxin acts on Nav1.2/SCN2A, Nav1.3/SCN3A and Nav1.6/SCN8A (EC(50)=1.7 uM). The polypeptide is Delta-conotoxin-like CnVID (Conus consors (Singed cone)).